The primary structure comprises 601 residues: HMG domain-containing protein 4 (601 aa).

A Glycyl lysine isopeptide (Lys-Gly) (interchain with G-Cter in SUMO2) cross-link involves residue Lys-8. 2 disordered regions span residues 51–410 and 473–514; these read VRNS…KKKN and TTVK…ASPA. A compositionally biased stretch (low complexity) spans 82-93; sequence DYYYGDISSLES. The residue at position 102 (Ser-102) is a Phosphoserine. Lys-191 is covalently cross-linked (Glycyl lysine isopeptide (Lys-Gly) (interchain with G-Cter in SUMO2)). Ser-197 is subject to Phosphoserine. Polar residues-rich tracts occupy residues 212 to 221 and 270 to 282; these read QYPSQQATVK and DASQ…SANL. Basic residues predominate over residues 316–344; that stretch reads IKKKKKSKKSKKKKDKEKHKEKRHSKSKR. A compositionally biased stretch (basic and acidic residues) spans 394-404; that stretch reads EEKDKERERGE. Positions 407–475 form a DNA-binding region, HMG box; the sequence is KKKNMSAYQV…KQNKAEATTV (69 aa). Ser-497, Ser-502, and Ser-512 each carry phosphoserine.

The protein localises to the nucleus. Negatively regulates Wnt/beta-catenin signaling during development. The protein is HMG domain-containing protein 4 (HMGXB4) of Homo sapiens (Human).